Here is a 251-residue protein sequence, read N- to C-terminus: MSQVSGQCPSRCDAPHGVPSAALDPAQTMSLLPGLEVARSTHPVEASSEEGFPEEAAPSMPHDSGLRAQQALNSIDLDVPTEAVTCQPQGNPQGCTPLLPNGSSHDHLSEPGSAGHAGNGALGGSKAHRKLQTHPSLGSQAGRKSRGSARSASQVPLQAQEGKAPAVRIHRQTASPTCCLRNAQLSGTALRSLRLESQGHRELNNKTLSQSNNKKPGVAAHAAIIPALTRPKQNCHDPSLLPGTHGVGKEF.

Disordered regions lie at residues 1-64 (MSQV…PHDS), 84-167 (VTCQ…APAV), and 230-251 (RPKQNCHDPSLLPGTHGVGKEF). Residues 84-94 (VTCQPQGNPQG) show a composition bias toward polar residues. Residues 138–154 (GSQAGRKSRGSARSASQ) are compositionally biased toward low complexity.

It belongs to the MDFI family. As to quaternary structure, interacts (via C-terminus) with AXIN1 and LEF1. Interacts with CCNT2. Interacts (via C-terminus) with Piezo channel composed of PIEZO1 or PIEZO2; the interaction prolongs Piezo channel inactivation. As to expression, in the embryo, highly expressed in the sclerotome. Also expressed in the notochord, neural tube, limb buds, heart, branchial arches and head mesenchyme. In the adult, highly expressed in skeletal muscle. Expressed at lower levels in most other tissues.

It localises to the nucleus. Its subcellular location is the cytoplasm. Functionally, inhibits the transactivation activity of the Myod family of myogenic factors and represses myogenesis. Acts by associating with Myod family members and retaining them in the cytoplasm by masking their nuclear localization signals. Can also interfere with the DNA-binding activity of Myod family members. Plays an important role in trophoblast and chondrogenic differentiation. Regulates the transcriptional activity of TCF7L1/TCF3 by interacting directly with Tcf7l1/Tcf3 and preventing it from binding DNA. Binds to the axin complex, resulting in an increase in the level of free beta-catenin. Affects axin regulation of the WNT and JNK signaling pathways. Regulates the activity of mechanosensitive Piezo channel. The protein is MyoD family inhibitor (Mdfi) of Mus musculus (Mouse).